Consider the following 288-residue polypeptide: MSYQPQTEAATSRFLNVEEAGKTLRIHFNDCGQGDETVVLLHGSGPGATGWANFSRNIDPLVEAGYRVILLDCPGWGKSDSVVNSGSRSDLNARILKSVVDQLDIAKIHLLGNSMGGHSSVAFTLKWPERVGKLVLMGGGTGGMSLFTPMPTEGIKRLNQLYRQPTIENLKLMMDIFVFDTSDLTDALFEARLNNMLSRRDHLENFVKSLEANPKQFPDFGPRLAEIKAQTLIVWGRNDRFVPMDAGLRLLSGIAGSELHIFRDCGHWAQWEHADAFNQLVLNFLARP.

The active-site Proton acceptor is histidine 267.

Belongs to the AB hydrolase superfamily. MhpC family. Homodimer.

It catalyses the reaction (2Z,4E)-2-hydroxy-6-oxonona-2,4-dienedioate + H2O = (2Z)-2-hydroxypenta-2,4-dienoate + succinate + H(+). The catalysed reaction is (2Z,4E,7E)-2-hydroxy-6-oxonona-2,4,7-trienedioate + H2O = (2Z)-2-hydroxypenta-2,4-dienoate + fumarate + H(+). It functions in the pathway aromatic compound metabolism; 3-phenylpropanoate degradation. Its function is as follows. Catalyzes the cleavage of the C5-C6 bond of 2-hydroxy-6-oxononadienedioate and 2-hydroxy-6-oxononatrienedioate, a dienol ring fission product of the bacterial meta-cleavage pathway for degradation of phenylpropionic acid. The protein is 2-hydroxy-6-oxononadienedioate/2-hydroxy-6-oxononatrienedioate hydrolase of Escherichia coli (strain K12 / DH10B).